We begin with the raw amino-acid sequence, 174 residues long: Ribosome maturation factor RimM (174 aa).

Residues 96–169 enclose the PRC barrel domain; it reads KDTFFICDLI…KMVVDLPQGL (74 aa).

It belongs to the RimM family. In terms of assembly, binds ribosomal protein uS19.

The protein localises to the cytoplasm. In terms of biological role, an accessory protein needed during the final step in the assembly of 30S ribosomal subunit, possibly for assembly of the head region. Essential for efficient processing of 16S rRNA. May be needed both before and after RbfA during the maturation of 16S rRNA. It has affinity for free ribosomal 30S subunits but not for 70S ribosomes. This chain is Ribosome maturation factor RimM, found in Acetivibrio thermocellus (strain ATCC 27405 / DSM 1237 / JCM 9322 / NBRC 103400 / NCIMB 10682 / NRRL B-4536 / VPI 7372) (Clostridium thermocellum).